A 217-amino-acid polypeptide reads, in one-letter code: ATP phosphoribosyltransferase (217 aa).

This sequence belongs to the ATP phosphoribosyltransferase family. Short subfamily. Heteromultimer composed of HisG and HisZ subunits.

Its subcellular location is the cytoplasm. The enzyme catalyses 1-(5-phospho-beta-D-ribosyl)-ATP + diphosphate = 5-phospho-alpha-D-ribose 1-diphosphate + ATP. It participates in amino-acid biosynthesis; L-histidine biosynthesis; L-histidine from 5-phospho-alpha-D-ribose 1-diphosphate: step 1/9. Its function is as follows. Catalyzes the condensation of ATP and 5-phosphoribose 1-diphosphate to form N'-(5'-phosphoribosyl)-ATP (PR-ATP). Has a crucial role in the pathway because the rate of histidine biosynthesis seems to be controlled primarily by regulation of HisG enzymatic activity. This is ATP phosphoribosyltransferase (hisG) from Neisseria meningitidis serogroup A / serotype 4A (strain DSM 15465 / Z2491).